A 641-amino-acid polypeptide reads, in one-letter code: Toxin TseL (641 aa).

As to quaternary structure, interacts with VgrG3; this interaction allows TseL secretion to target cells.

It is found in the secreted. Toxin secreted by the type VI (T6SS) secretion system that acts on prokaryotic as well as eukaryotic target cells. This Vibrio cholerae serotype O1 (strain ATCC 39315 / El Tor Inaba N16961) protein is Toxin TseL.